We begin with the raw amino-acid sequence, 565 residues long: Probable beta-glucosidase btgE (565 aa).

Residues 1–18 form the signal peptide; sequence MRGAILATAAALAGTAMA. A disordered region spans residues 246 to 304; it reads TGQDEPTSAPAAPSTTAVPATTTAAPETTTAAPDTTTAVPSTSSAAPSSSSTAPASTGA. Residues 251-304 are compositionally biased toward low complexity; it reads PTSAPAAPSTTAVPATTTAAPETTTAAPDTTTAVPSTSSAAPSSSSTAPASTGA. Glu-405 acts as the Proton donor in catalysis. Residue Glu-501 is the Nucleophile of the active site.

Belongs to the glycosyl hydrolase 17 family.

Its subcellular location is the secreted. It localises to the cell wall. The enzyme catalyses Hydrolysis of terminal, non-reducing beta-D-glucosyl residues with release of beta-D-glucose.. It participates in glycan metabolism; cellulose degradation. In terms of biological role, beta-glucosidases are one of a number of cellulolytic enzymes involved in the degradation of cellulosic biomass. Catalyzes the last step releasing glucose from the inhibitory cellobiose. The polypeptide is Probable beta-glucosidase btgE (btgE) (Aspergillus fumigatus (strain CBS 144.89 / FGSC A1163 / CEA10) (Neosartorya fumigata)).